Consider the following 49-residue polypeptide: Large ribosomal subunit protein bL33B (49 aa).

The protein belongs to the bacterial ribosomal protein bL33 family.

The protein is Large ribosomal subunit protein bL33B of Acholeplasma laidlawii (strain PG-8A).